Reading from the N-terminus, the 132-residue chain is Small ribosomal subunit protein uS8 (132 aa).

Belongs to the universal ribosomal protein uS8 family. In terms of assembly, part of the 30S ribosomal subunit. Contacts proteins S5 and S12.

One of the primary rRNA binding proteins, it binds directly to 16S rRNA central domain where it helps coordinate assembly of the platform of the 30S subunit. This is Small ribosomal subunit protein uS8 from Geobacillus thermodenitrificans (strain NG80-2).